The chain runs to 61 residues: Large ribosomal subunit protein eL29y (61 aa).

A disordered region spans residues 1 to 61; sequence MAKSKNHTAH…KSGENAGVEE (61 aa). Positions 15–31 are enriched in basic residues; that stretch reads KAHKNGIKKPRRHRHTP.

It belongs to the eukaryotic ribosomal protein eL29 family.

The polypeptide is Large ribosomal subunit protein eL29y (RPL29B) (Arabidopsis thaliana (Mouse-ear cress)).